A 118-amino-acid chain; its full sequence is Vesicle-associated membrane protein 1 (118 aa).

Positions 1–15 are enriched in low complexity; sequence MSAPAQPPAEGTEGA. Residues 1–36 are disordered; it reads MSAPAQPPAEGTEGAAPGGGPPGPPPNMTSNRRLQQ. Residues 1-96 are Cytoplasmic-facing; sequence MSAPAQPPAE…KRKYWWKNCK (96 aa). The region spanning 33 to 93 is the v-SNARE coiled-coil homology domain; the sequence is RLQQTQAQVE…AKLKRKYWWK (61 aa). Position 63 is a phosphoserine (Ser63). A helical; Anchor for type IV membrane protein transmembrane segment spans residues 97–116; it reads MMIMLGAICAIIVVVIVIYF. Over 117-118 the chain is Vesicular; sequence FT.

Belongs to the synaptobrevin family. As to quaternary structure, interacts with VAPA and VAPB. In terms of processing, (Microbial infection) Targeted and hydrolyzed by C.botulinum neurotoxin type X (BoNT/X) which hydrolyzes the 68-Arg-|-Ala-69 bond and probably inhibits neurotransmitter release. It remains unknown whether BoNT/X is ever produced, or what organisms it targets. In terms of tissue distribution, highly expressed in the zona incerta and rostral periolivary region of the brain. Other neuroanatomical regions show negligible expression. Expressed in the retina, expression observed in the outer segments of the photoreceptors, in the outer and inner plexiform layers, and in a subset of ganglion cells.

It localises to the cytoplasmic vesicle. It is found in the secretory vesicle. The protein resides in the synaptic vesicle membrane. Its subcellular location is the synapse. The protein localises to the synaptosome. It localises to the cytoplasmic vesicle membrane. Involved in the targeting and/or fusion of transport vesicles to their target membrane. This Mus musculus (Mouse) protein is Vesicle-associated membrane protein 1 (Vamp1).